We begin with the raw amino-acid sequence, 427 residues long: Adenylosuccinate synthetase (427 aa).

Residues 12 to 18 (GDEGKGK) and 40 to 42 (GHT) contribute to the GTP site. The active-site Proton acceptor is Asp-13. Mg(2+) contacts are provided by Asp-13 and Gly-40. IMP is bound by residues 13–16 (DEGK), 38–41 (NAGH), Thr-128, Arg-142, Gln-223, Thr-238, and Arg-302. His-41 serves as the catalytic Proton donor. 298–304 (TTTGRPR) lines the substrate pocket. Residues Arg-304, 330–332 (KLD), and 412–414 (AVG) each bind GTP.

The protein belongs to the adenylosuccinate synthetase family. As to quaternary structure, homodimer. Mg(2+) serves as cofactor.

The protein localises to the cytoplasm. It carries out the reaction IMP + L-aspartate + GTP = N(6)-(1,2-dicarboxyethyl)-AMP + GDP + phosphate + 2 H(+). It functions in the pathway purine metabolism; AMP biosynthesis via de novo pathway; AMP from IMP: step 1/2. Plays an important role in the de novo pathway of purine nucleotide biosynthesis. Catalyzes the first committed step in the biosynthesis of AMP from IMP. The protein is Adenylosuccinate synthetase of Moorella thermoacetica (strain ATCC 39073 / JCM 9320).